We begin with the raw amino-acid sequence, 401 residues long: Anhydro-N-acetylmuramic acid kinase (401 aa).

ATP is bound at residue 25 to 32; sequence GTSLDGLD.

This sequence belongs to the anhydro-N-acetylmuramic acid kinase family.

The catalysed reaction is 1,6-anhydro-N-acetyl-beta-muramate + ATP + H2O = N-acetyl-D-muramate 6-phosphate + ADP + H(+). It participates in amino-sugar metabolism; 1,6-anhydro-N-acetylmuramate degradation. The protein operates within cell wall biogenesis; peptidoglycan recycling. Functionally, catalyzes the specific phosphorylation of 1,6-anhydro-N-acetylmuramic acid (anhMurNAc) with the simultaneous cleavage of the 1,6-anhydro ring, generating MurNAc-6-P. Is required for the utilization of anhMurNAc either imported from the medium or derived from its own cell wall murein, and thus plays a role in cell wall recycling. The protein is Anhydro-N-acetylmuramic acid kinase of Pseudoalteromonas translucida (strain TAC 125).